A 354-amino-acid chain; its full sequence is Hyaluronan and proteoglycan link protein 1 (354 aa).

The propeptide occupies 1 to 15 (MKSLLLLVLISICWA). N-linked (GlcNAc...) asparagine glycosylation is found at Asn21 and Asn56. In terms of domain architecture, Ig-like V-type spans 38-152 (PHLLVEAEQA…EGLEDDTVVV (115 aa)). 5 disulfides stabilise this stretch: Cys61–Cys139, Cys181–Cys252, Cys205–Cys226, Cys279–Cys349, and Cys304–Cys325. 2 consecutive Link domains span residues 159–254 (VVFP…FCFT) and 259–351 (GRFY…YCFR).

Belongs to the HAPLN family. In terms of tissue distribution, widely expressed. Weakly expressed in the brain.

Its subcellular location is the secreted. The protein localises to the extracellular space. It localises to the extracellular matrix. Functionally, stabilizes the aggregates of proteoglycan monomers with hyaluronic acid in the extracellular cartilage matrix. The polypeptide is Hyaluronan and proteoglycan link protein 1 (HAPLN1) (Homo sapiens (Human)).